The following is a 340-amino-acid chain: Spike protein P5 (340 aa).

The tract at residues 2–122 (ANQQIGGSTV…NFPIALGVWP (121 aa)) is domain-1. In terms of domain architecture, Collagen-like spans 123 to 141 (SGIKGDKGDPGAPGPAGGT). Residues 142–340 (VVVEDSGASF…IINITAAKIN (199 aa)) form a domain-2 region.

Homotrimer.

The protein localises to the virion. Functionally, in association with P31 and P2, forms the spike complexes located at the 5-fold vertices of the capsid. Essential for viral infectivity. In Enterobacteria phage PRD1 (Bacteriophage PRD1), this protein is Spike protein P5 (V).